The primary structure comprises 481 residues: Cysteine--tRNA ligase (481 aa).

Cys27 contributes to the Zn(2+) binding site. The 'HIGH' region signature appears at Pro29–Asn39. Cys222, His247, and Glu251 together coordinate Zn(2+). A 'KMSKS' region motif is present at residues Lys279–Ser283. Lys282 lines the ATP pocket.

This sequence belongs to the class-I aminoacyl-tRNA synthetase family. In terms of assembly, monomer. It depends on Zn(2+) as a cofactor.

It is found in the cytoplasm. It carries out the reaction tRNA(Cys) + L-cysteine + ATP = L-cysteinyl-tRNA(Cys) + AMP + diphosphate. This chain is Cysteine--tRNA ligase, found in Borrelia hermsii (strain HS1 / DAH).